Consider the following 482-residue polypeptide: 23S rRNA (uracil(1939)-C(5))-methyltransferase RlmD (482 aa).

The disordered stretch occupies residues 1–33 (MANLFKQSRAKQKNKTTPSQTQTSTKGSARANA). Residues 15 to 28 (KTTPSQTQTSTKGS) are compositionally biased toward low complexity. Residues 51-108 (TAQDANNNAITIQELDWMGQGVARGATMYFVEGALPGETCDIEVVSSKKKVVSAKTIS) form the TRAM domain. Residues Cys121, Cys127, Cys130, and Cys208 each coordinate [4Fe-4S] cluster. 6 residues coordinate S-adenosyl-L-methionine: Gln313, Phe342, Asn347, Glu363, Asp390, and Asp411. The active-site Nucleophile is the Cys437.

This sequence belongs to the class I-like SAM-binding methyltransferase superfamily. RNA M5U methyltransferase family. RlmD subfamily.

It catalyses the reaction uridine(1939) in 23S rRNA + S-adenosyl-L-methionine = 5-methyluridine(1939) in 23S rRNA + S-adenosyl-L-homocysteine + H(+). Catalyzes the formation of 5-methyl-uridine at position 1939 (m5U1939) in 23S rRNA. The protein is 23S rRNA (uracil(1939)-C(5))-methyltransferase RlmD of Alteromonas mediterranea (strain DSM 17117 / CIP 110805 / LMG 28347 / Deep ecotype).